Consider the following 332-residue polypeptide: Ferredoxin--NADP reductase (332 aa).

Positions 20, 39, 47, 52, 92, 126, 288, and 329 each coordinate FAD.

The protein belongs to the ferredoxin--NADP reductase type 2 family. In terms of assembly, homodimer. FAD serves as cofactor.

It carries out the reaction 2 reduced [2Fe-2S]-[ferredoxin] + NADP(+) + H(+) = 2 oxidized [2Fe-2S]-[ferredoxin] + NADPH. This Geobacillus kaustophilus (strain HTA426) protein is Ferredoxin--NADP reductase.